The sequence spans 465 residues: Type II restriction enzyme BsuMI component YdjA (465 aa).

As to quaternary structure, bsuMI restriction activity requires YdiR, YdiS and YdjA.

The enzyme catalyses Endonucleolytic cleavage of DNA to give specific double-stranded fragments with terminal 5'-phosphates.. In terms of biological role, a P subtype restriction enzyme that recognizes the double-stranded sequence 5'-CTCGAG-3'; the cleavage site is unknown. The protein is Type II restriction enzyme BsuMI component YdjA (ydjA) of Bacillus subtilis (strain 168).